We begin with the raw amino-acid sequence, 249 residues long: Tetrahydromethanopterin S-methyltransferase subunit A (249 aa).

The Cytoplasmic segment spans residues 1–227 (MADKKEVIQN…KISSGYYAGK (227 aa)). H84 contributes to the 5-hydroxybenzimidazolylcob(I)amide binding site. Residues 228–248 (IEGIVIGFILTLVFLIIIIQG) traverse the membrane as a helical segment. L249 is a topological domain (extracellular).

The protein belongs to the MtrA family. In terms of assembly, the complex is composed of 8 subunits; MtrA, MtrB, MtrC, MtrD, MtrE, MtrF, MtrG and MtrH. It depends on 5-hydroxybenzimidazolylcob(I)amide as a cofactor.

The protein localises to the cell membrane. It carries out the reaction 5-methyl-5,6,7,8-tetrahydromethanopterin + coenzyme M + 2 Na(+)(in) = 5,6,7,8-tetrahydromethanopterin + methyl-coenzyme M + 2 Na(+)(out). The protein operates within one-carbon metabolism; methanogenesis from CO(2); methyl-coenzyme M from 5,10-methylene-5,6,7,8-tetrahydromethanopterin: step 2/2. Its function is as follows. Part of a complex that catalyzes the formation of methyl-coenzyme M and tetrahydromethanopterin from coenzyme M and methyl-tetrahydromethanopterin. This is an energy-conserving, sodium-ion translocating step. The sequence is that of Tetrahydromethanopterin S-methyltransferase subunit A from Methanosphaera stadtmanae (strain ATCC 43021 / DSM 3091 / JCM 11832 / MCB-3).